The following is a 470-amino-acid chain: Ribulose bisphosphate carboxylase large chain (470 aa).

Asn118 and Thr168 together coordinate substrate. Lys170 serves as the catalytic Proton acceptor. Residue Lys172 participates in substrate binding. Mg(2+) is bound by residues Lys196, Asp198, and Glu199. At Lys196 the chain carries N6-carboxylysine. His289 acts as the Proton acceptor in catalysis. 3 residues coordinate substrate: Arg290, His322, and Ser374.

It belongs to the RuBisCO large chain family. Type I subfamily. In terms of assembly, heterohexadecamer of 8 large chains and 8 small chains; disulfide-linked. The disulfide link is formed within the large subunit homodimers. RuBisCO interacts with the C-terminus of CcmM, and can be found in complexes that also include carbonic anhydrase (ccaA). RuBisCO associates with both the internal and shell portion of carboxysomes. Mg(2+) is required as a cofactor. Post-translationally, the disulfide bond which can form in the large chain dimeric partners within the hexadecamer appears to be associated with oxidative stress and protein turnover.

Its subcellular location is the carboxysome. The enzyme catalyses 2 (2R)-3-phosphoglycerate + 2 H(+) = D-ribulose 1,5-bisphosphate + CO2 + H2O. It carries out the reaction D-ribulose 1,5-bisphosphate + O2 = 2-phosphoglycolate + (2R)-3-phosphoglycerate + 2 H(+). In terms of biological role, ruBisCO catalyzes two reactions: the carboxylation of D-ribulose 1,5-bisphosphate, the primary event in carbon dioxide fixation, as well as the oxidative fragmentation of the pentose substrate in the photorespiration process. Both reactions occur simultaneously and in competition at the same active site. The sequence is that of Ribulose bisphosphate carboxylase large chain from Synechocystis sp. (strain ATCC 27184 / PCC 6803 / Kazusa).